A 1058-amino-acid polypeptide reads, in one-letter code: Carbamoyl phosphate synthase large chain (1058 aa).

The carboxyphosphate synthetic domain stretch occupies residues 1–401; the sequence is MPKRTDIQKI…SLLKACRSLE (401 aa). ATP is bound by residues R129, R169, G175, G176, R208, I210, E215, G241, I242, H243, Q284, and E298. The ATP-grasp 1 domain occupies 133 to 327; the sequence is KQLMEELEQP…IAKLAAKIAV (195 aa). Mg(2+) contacts are provided by Q284, E298, and N300. Mn(2+)-binding residues include Q284, E298, and N300. Positions 402 to 546 are oligomerization domain; sequence IGVHHNEIPE…YSTYGWENES (145 aa). Residues 547 to 929 form a carbamoyl phosphate synthetic domain region; the sequence is IKSDKESVLV…ALYKAFEASY (383 aa). One can recognise an ATP-grasp 2 domain in the interval 671–861; the sequence is EQALKELDIP…MAQVATKLIL (191 aa). Residues R707, S746, I748, E752, G777, V778, H779, S780, Q820, and E832 each contribute to the ATP site. Positions 820, 832, and 834 each coordinate Mg(2+). Positions 820, 832, and 834 each coordinate Mn(2+). One can recognise an MGS-like domain in the interval 930-1058; that stretch reads LHLPTFGNVV…ESRSFVTEAI (129 aa). The allosteric domain stretch occupies residues 930–1058; the sequence is LHLPTFGNVV…ESRSFVTEAI (129 aa).

This sequence belongs to the CarB family. Composed of two chains; the small (or glutamine) chain promotes the hydrolysis of glutamine to ammonia, which is used by the large (or ammonia) chain to synthesize carbamoyl phosphate. Tetramer of heterodimers (alpha,beta)4. Requires Mg(2+) as cofactor. The cofactor is Mn(2+).

The catalysed reaction is hydrogencarbonate + L-glutamine + 2 ATP + H2O = carbamoyl phosphate + L-glutamate + 2 ADP + phosphate + 2 H(+). It catalyses the reaction hydrogencarbonate + NH4(+) + 2 ATP = carbamoyl phosphate + 2 ADP + phosphate + 2 H(+). It participates in amino-acid biosynthesis; L-arginine biosynthesis; carbamoyl phosphate from bicarbonate: step 1/1. Its pathway is pyrimidine metabolism; UMP biosynthesis via de novo pathway; (S)-dihydroorotate from bicarbonate: step 1/3. In terms of biological role, large subunit of the glutamine-dependent carbamoyl phosphate synthetase (CPSase). CPSase catalyzes the formation of carbamoyl phosphate from the ammonia moiety of glutamine, carbonate, and phosphate donated by ATP, constituting the first step of 2 biosynthetic pathways, one leading to arginine and/or urea and the other to pyrimidine nucleotides. The large subunit (synthetase) binds the substrates ammonia (free or transferred from glutamine from the small subunit), hydrogencarbonate and ATP and carries out an ATP-coupled ligase reaction, activating hydrogencarbonate by forming carboxy phosphate which reacts with ammonia to form carbamoyl phosphate. The chain is Carbamoyl phosphate synthase large chain from Streptococcus pneumoniae (strain ATCC 700669 / Spain 23F-1).